The primary structure comprises 287 residues: U-megalopygitoxin(8)-Mo12 (287 aa).

Residues 1 to 17 form the signal peptide; it reads MNLQYLILSLLSTTVYG. His-284 carries the histidine amide modification.

This sequence belongs to the megalysin family. Post-translationally, contains 2 disulfide bonds. In terms of tissue distribution, expressed by the venom apparatus.

Its subcellular location is the secreted. It localises to the target cell membrane. Its function is as follows. May function as a large pore-forming protein. This is U-megalopygitoxin(8)-Mo12 from Megalopyge opercularis (Southern flannel moth).